Here is an 83-residue protein sequence, read N- to C-terminus: Cytochrome b559 subunit alpha (83 aa).

A helical membrane pass occupies residues 21 to 35 (VIHSITIPSLFIAGW). His23 lines the heme pocket.

This sequence belongs to the PsbE/PsbF family. Heterodimer of an alpha subunit and a beta subunit. PSII is composed of 1 copy each of membrane proteins PsbA, PsbB, PsbC, PsbD, PsbE, PsbF, PsbH, PsbI, PsbJ, PsbK, PsbL, PsbM, PsbT, PsbX, PsbY, PsbZ, Psb30/Ycf12, at least 3 peripheral proteins of the oxygen-evolving complex and a large number of cofactors. It forms dimeric complexes. Heme b is required as a cofactor.

It is found in the plastid. The protein resides in the chloroplast thylakoid membrane. This b-type cytochrome is tightly associated with the reaction center of photosystem II (PSII). PSII is a light-driven water:plastoquinone oxidoreductase that uses light energy to abstract electrons from H(2)O, generating O(2) and a proton gradient subsequently used for ATP formation. It consists of a core antenna complex that captures photons, and an electron transfer chain that converts photonic excitation into a charge separation. The polypeptide is Cytochrome b559 subunit alpha (Panax ginseng (Korean ginseng)).